The chain runs to 395 residues: Na(+)/H(+) antiporter NhaA (395 aa).

The next 11 helical transmembrane spans lie at 11–31, 61–81, 96–116, 127–147, 156–176, 179–199, 202–222, 264–284, 295–315, 331–351, and 366–386; these read FAME…ALII, LLLW…GLEV, IVLP…IYWF, GWAI…ALLG, LFLM…IAIF, GTLS…LVAM, MGVV…VCVL, FGIL…GVTL, IAVG…WMAV, VLGV…VGSL, and MGIL…TAAA.

Belongs to the NhaA Na(+)/H(+) (TC 2.A.33) antiporter family.

The protein localises to the cell inner membrane. The enzyme catalyses Na(+)(in) + 2 H(+)(out) = Na(+)(out) + 2 H(+)(in). Its function is as follows. Na(+)/H(+) antiporter that extrudes sodium in exchange for external protons. The polypeptide is Na(+)/H(+) antiporter NhaA (Pseudomonas fluorescens (strain ATCC BAA-477 / NRRL B-23932 / Pf-5)).